Consider the following 786-residue polypeptide: Ciliated left-right organizer ZP-N domains-containing protein (786 aa).

Positions 1–18 (MWGSVAVVWAICLACIQP) are cleaved as a signal peptide.

As to expression, expressed specifically by cells of the ciliated left-right organizer.

Functionally, plays a role in left-right patterning process. The sequence is that of Ciliated left-right organizer ZP-N domains-containing protein (Ciroz) from Mus musculus (Mouse).